The chain runs to 361 residues: Queuine tRNA-ribosyltransferase (361 aa).

The Proton acceptor role is filled by Asp92. Substrate is bound by residues 92–96 (DSGGF), Asp146, Gln189, and Gly216. Residues 247 to 253 (GVGKPAD) are RNA binding. The active-site Nucleophile is Asp266. Residues 271–275 (TRSGR) are RNA binding; important for wobble base 34 recognition. Positions 304, 306, 309, and 335 each coordinate Zn(2+).

Belongs to the queuine tRNA-ribosyltransferase family. Homodimer. Within each dimer, one monomer is responsible for RNA recognition and catalysis, while the other monomer binds to the replacement base PreQ1. Zn(2+) is required as a cofactor.

The enzyme catalyses 7-aminomethyl-7-carbaguanine + guanosine(34) in tRNA = 7-aminomethyl-7-carbaguanosine(34) in tRNA + guanine. It participates in tRNA modification; tRNA-queuosine biosynthesis. Functionally, catalyzes the base-exchange of a guanine (G) residue with the queuine precursor 7-aminomethyl-7-deazaguanine (PreQ1) at position 34 (anticodon wobble position) in tRNAs with GU(N) anticodons (tRNA-Asp, -Asn, -His and -Tyr). Catalysis occurs through a double-displacement mechanism. The nucleophile active site attacks the C1' of nucleotide 34 to detach the guanine base from the RNA, forming a covalent enzyme-RNA intermediate. The proton acceptor active site deprotonates the incoming PreQ1, allowing a nucleophilic attack on the C1' of the ribose to form the product. After dissociation, two additional enzymatic reactions on the tRNA convert PreQ1 to queuine (Q), resulting in the hypermodified nucleoside queuosine (7-(((4,5-cis-dihydroxy-2-cyclopenten-1-yl)amino)methyl)-7-deazaguanosine). The sequence is that of Queuine tRNA-ribosyltransferase from Rickettsia canadensis (strain McKiel).